We begin with the raw amino-acid sequence, 533 residues long: Undecaprenyl phosphate-alpha-4-amino-4-deoxy-L-arabinose arabinosyl transferase (533 aa).

Helical transmembrane passes span 10-30, 64-84, 86-106, 113-133, 137-157, 170-190, 207-227, 257-277, 290-310, 312-332, 345-365, 377-397, and 402-422; these read LLLA…GLWI, PAGY…LFGV, IASA…AGKI, SFAS…AGYS, PQFT…VHSI, VACG…PAII, FGPL…LAVH, WWFY…LLPV, DTAF…LSKG, LPTY…DALV, VNGI…IYVQ, HLLL…LQGI, and FWAL…AALP.

The protein belongs to the glycosyltransferase 83 family.

Its subcellular location is the cell inner membrane. It catalyses the reaction 4-amino-4-deoxy-alpha-L-arabinopyranosyl di-trans,octa-cis-undecaprenyl phosphate + lipid IVA = lipid IIA + di-trans,octa-cis-undecaprenyl phosphate.. The protein operates within lipopolysaccharide metabolism; 4-amino-4-deoxy-beta-L-arabinose-lipid A biosynthesis. In terms of biological role, catalyzes the transfer of the L-Ara4N moiety of the glycolipid undecaprenyl phosphate-alpha-L-Ara4N to lipid A. The modified arabinose is attached to lipid A and is required for resistance to polymyxin and cationic antimicrobial peptides. This chain is Undecaprenyl phosphate-alpha-4-amino-4-deoxy-L-arabinose arabinosyl transferase, found in Pseudomonas savastanoi pv. phaseolicola (strain 1448A / Race 6) (Pseudomonas syringae pv. phaseolicola (strain 1448A / Race 6)).